Reading from the N-terminus, the 538-residue chain is Coiled-coil domain-containing protein 8 (538 aa).

The interval 58-128 (IMEKSTPHPP…QGPRRGKKVR (71 aa)) is disordered. Residues 119–128 (QGPRRGKKVR) show a composition bias toward basic residues. A phosphoserine mark is found at Ser-142, Ser-146, and Ser-261. The tract at residues 213–473 (WAPRAGPGVG…GTAPGARARK (261 aa)) is disordered. Residues 301–313 (DSQREEAIADQRE) show a composition bias toward basic and acidic residues. A compositionally biased stretch (low complexity) spans 321 to 332 (AGAPADQGAEAA). A coiled-coil region spans residues 349 to 366 (AEEGAEAADNQREEAADN). 3 stretches are compositionally biased toward basic and acidic residues: residues 357–373 (DNQR…EAPA), 381–392 (DNHREEAADNQR), and 405–419 (DNQR…RERA). 2 stretches are compositionally biased toward low complexity: residues 428 to 438 (QRAQARAGQRA) and 458 to 469 (AAQGTTGTAPGA). The PxLPxI/L motif; mediates interaction with ANKRA2 signature appears at 500–506 (PRLPTLP). The stretch at 514-535 (EARNLRVLRAEARAEAEQGEQE) forms a coiled coil.

In terms of assembly, component of the 3M complex, composed of core components CUL7, CCDC8 and OBSL1. Interacts (via PxLPxI/L motif) with ANKRA2 (via ankyrin repeats); may link the 3M complex to histone deacetylases including HDAC4 and HDAC5. Widely expressed with low levels in spleen, skeletal muscle, small intestine, kidney and liver.

The protein localises to the cytoplasm. The protein resides in the cytoskeleton. It is found in the microtubule organizing center. It localises to the centrosome. In terms of biological role, core component of the 3M complex, a complex required to regulate microtubule dynamics and genome integrity. It is unclear how the 3M complex regulates microtubules, it could act by controlling the level of a microtubule stabilizer. Required for localization of CUL7 to the centrosome. This is Coiled-coil domain-containing protein 8 (CCDC8) from Homo sapiens (Human).